The sequence spans 590 residues: Aspartate--tRNA(Asp/Asn) ligase (590 aa).

Glu-175 provides a ligand contact to L-aspartate. The interval 199–202 (QQYK) is aspartate. Arg-221 and His-450 together coordinate L-aspartate. 221–223 (RDE) contacts ATP. Glu-484 is a binding site for ATP. Arg-491 contributes to the L-aspartate binding site. Residue 536–539 (GVDR) participates in ATP binding.

It belongs to the class-II aminoacyl-tRNA synthetase family. Type 1 subfamily. Homodimer.

It is found in the cytoplasm. The enzyme catalyses tRNA(Asx) + L-aspartate + ATP = L-aspartyl-tRNA(Asx) + AMP + diphosphate. Aspartyl-tRNA synthetase with relaxed tRNA specificity since it is able to aspartylate not only its cognate tRNA(Asp) but also tRNA(Asn). Reaction proceeds in two steps: L-aspartate is first activated by ATP to form Asp-AMP and then transferred to the acceptor end of tRNA(Asp/Asn). In Bradyrhizobium diazoefficiens (strain JCM 10833 / BCRC 13528 / IAM 13628 / NBRC 14792 / USDA 110), this protein is Aspartate--tRNA(Asp/Asn) ligase.